Consider the following 67-residue polypeptide: Small ribosomal subunit protein eS17 (67 aa).

Belongs to the eukaryotic ribosomal protein eS17 family.

The sequence is that of Small ribosomal subunit protein eS17 from Thermococcus gammatolerans (strain DSM 15229 / JCM 11827 / EJ3).